The sequence spans 563 residues: Arginine--tRNA ligase (563 aa).

Positions 121–131 (PNIAKPMSMGH) match the 'HIGH' region motif.

This sequence belongs to the class-I aminoacyl-tRNA synthetase family. Monomer.

The protein localises to the cytoplasm. It catalyses the reaction tRNA(Arg) + L-arginine + ATP = L-arginyl-tRNA(Arg) + AMP + diphosphate. In Leuconostoc citreum (strain KM20), this protein is Arginine--tRNA ligase.